The sequence spans 584 residues: MDKGKENRAQGVLKRISGPVVTAVGLDAHMYDVVKVGNEELMGEVIKIQGENIIIQVYEDTAGIRPGESVGNTGLSLAVELGPGLLTSIYDGIQRPLEVLVDKMGNFIERGVSAPGLSHEKKWEFVPTVKKGDEVKAGDILGTVQETNIVHKVMVPPKAKGGKIKKISGGSFTVDETVCVLEDGTEIAMLQRWPVRVPRPVTQKLNPDIPLITGQRILDGLFPIAKGGTAAIPGPFGSGKTVTQQQLAKWSDAEIVVYIGCGERGNEMTEVLTEFPELEDPKTGKPLMERTVLIANTSNMPVAAREASVYTGITIAEYFRDMGYDVSLMADSTSRWAEAMREISSRLEEMPGEEGYPAYLAARLSEFYERAGRVISLNGEGGSVSVIGAVSPPGGDFSEPVTQNTLRIVKVFWALDAKLSQRRHFPAINWLNSYSLYLDALNEWYDKEVSPEWNPLRAWAMGVLQKEAELQEIVQLVGSDALPDEEQVTIEVARMIREIFLQQNAYDAVDTFCPMSKQYDMMKAIKHYADLARTAQTGGATPQQVIGIRSKNELPQIKFIRDYEPELAKIMKDMEAEFDAMRAV.

An ATP-binding site is contributed by 234–241; sequence GPFGSGKT.

The protein belongs to the ATPase alpha/beta chains family. In terms of assembly, has multiple subunits with at least A(3), B(3), C, D, E, F, H, I and proteolipid K(x).

It is found in the cell membrane. It catalyses the reaction ATP + H2O + 4 H(+)(in) = ADP + phosphate + 5 H(+)(out). Its function is as follows. Component of the A-type ATP synthase that produces ATP from ADP in the presence of a proton gradient across the membrane. The A chain is the catalytic subunit. This chain is A-type ATP synthase subunit A, found in Methanoculleus marisnigri (strain ATCC 35101 / DSM 1498 / JR1).